Consider the following 490-residue polypeptide: Dual specificity protein kinase CLK3 (490 aa).

The interval 1–138 is disordered; that stretch reads MHHCKRYRSP…SKRSSRSVED (138 aa). At Y7 the chain carries Phosphotyrosine. A phosphoserine mark is found at S9, S49, S51, S67, S76, and S78. Basic and acidic residues-rich tracts occupy residues 26-56 and 63-76; these read YSRE…DRLP and ERRD…EERS. Basic residues predominate over residues 88-116; it reads RSRHRRRSRERGPYRTRKHAHHCHKRRTR. Over residues 117-130 the composition is skewed to low complexity; sequence SCSSASSRSQQSSK. S135 is modified (phosphoserine). Residues 156–472 form the Protein kinase domain; it reads YEIVGNLGEG…LAEALLHPFF (317 aa). Residues 162–170 and K186 each bind ATP; that span reads LGEGTFGKV. The Proton acceptor role is filled by D283.

The protein belongs to the protein kinase superfamily. CMGC Ser/Thr protein kinase family. Lammer subfamily. In terms of processing, autophosphorylates on all three types of residues. Endothelial cells.

It is found in the nucleus. The protein resides in the cytoplasm. The protein localises to the cytoplasmic vesicle. Its subcellular location is the secretory vesicle. It localises to the acrosome. It is found in the nucleus speckle. The enzyme catalyses L-seryl-[protein] + ATP = O-phospho-L-seryl-[protein] + ADP + H(+). It catalyses the reaction L-threonyl-[protein] + ATP = O-phospho-L-threonyl-[protein] + ADP + H(+). It carries out the reaction L-tyrosyl-[protein] + ATP = O-phospho-L-tyrosyl-[protein] + ADP + H(+). Leucettine L41 inhibits its kinase activity and affects the regulation of alternative splicing mediated by phosphorylation of SR proteins. In terms of biological role, dual specificity kinase acting on both serine/threonine and tyrosine-containing substrates. Phosphorylates serine- and arginine-rich (SR) proteins of the spliceosomal complex. May be a constituent of a network of regulatory mechanisms that enable SR proteins to control RNA splicing and can cause redistribution of SR proteins from speckles to a diffuse nucleoplasmic distribution. Phosphorylates SRSF1 and SRSF3. Regulates the alternative splicing of tissue factor (F3) pre-mRNA in endothelial cells. This chain is Dual specificity protein kinase CLK3, found in Homo sapiens (Human).